Here is a 271-residue protein sequence, read N- to C-terminus: Probable ribosomal RNA small subunit methyltransferase A (271 aa).

5 residues coordinate S-adenosyl-L-methionine: L12, G37, E58, D83, and N100.

The protein belongs to the class I-like SAM-binding methyltransferase superfamily. rRNA adenine N(6)-methyltransferase family. RsmA subfamily.

Its subcellular location is the cytoplasm. In terms of biological role, specifically dimethylates two adjacent adenosines in the loop of a conserved hairpin near the 3'-end of 16S rRNA in the 30S particle. May play a critical role in biogenesis of 30S subunits. The polypeptide is Probable ribosomal RNA small subunit methyltransferase A (Methanococcus aeolicus (strain ATCC BAA-1280 / DSM 17508 / OCM 812 / Nankai-3)).